A 665-amino-acid polypeptide reads, in one-letter code: Cyclic nucleotide-gated cation channel subunit A (665 aa).

The Cytoplasmic portion of the chain corresponds to 1-110 (MRHFKVKAMV…DPTLQSHYRW (110 aa)). Residues 111-131 (LAIVSLAVLYNIIFVVGRAVF) traverse the membrane as a helical segment. The Extracellular segment spans residues 132–138 (WEINKSA). An N-linked (GlcNAc...) asparagine glycan is attached at Asn-135. Residues 139–159 (PAFWYTLDYLCDFIYLLDTLV) form a helical membrane-spanning segment. At 160–186 (HMHEGFLDQGLLVRDAFRLRRHYFHTK) the chain is on the cytoplasmic side. The helical transmembrane segment at 187–207 (GWYLDVLSMLPTDLAYIWWPP) threads the bilayer. At 208–253 (ETCSSLYLPCPVIVRLNRLLRINRLWEWFDRTETATGYPNAFRICK) the chain is on the extracellular side. Residues 254–274 (VVLAILVLIHWNACMYFAISY) form a helical membrane-spanning segment. Residues 275–325 (EIGFSSDSWVYNLNGTRNNTLQRQYIYSFYWSTLTLTTIGETPTPENDVEY) lie on the Cytoplasmic side of the membrane. Residues 326–346 (LFVVADFLAGVLIFATIVGNI) form a helical membrane-spanning segment. Residues 347 to 481 (GSMISNMNVA…GKLSVVGDDG (135 aa)) lie on the Extracellular side of the membrane. 3',5'-cyclic GMP is bound by residues 437–559 (LLEA…DGLL), Glu-496, and Arg-511. Residues 482-502 (ITVLATLGAGSVFGEVSVLEI) form a helical membrane-spanning segment. At 503 to 665 (AGNRTGNRRT…SSDAAKQNTL (163 aa)) the chain is on the cytoplasmic side. Residues 633–665 (RSGRLYSLQPKRRPRSRPDATAKSSDAAKQNTL) are disordered. A compositionally biased stretch (polar residues) spans 654–665 (AKSSDAAKQNTL).

The protein belongs to the cyclic nucleotide-gated cation channel (TC 1.A.1.5) family. Expressed in antennae and the visual system.

The protein localises to the membrane. Its function is as follows. Approximately 50-fold more sensitive to cGMP than to cAMP. May be involved in transduction cascades of both invertebrate photoreceptors and olfactory sensillae. The protein is Cyclic nucleotide-gated cation channel subunit A (CngA) of Drosophila melanogaster (Fruit fly).